The sequence spans 268 residues: AB hydrolase superfamily protein YisY (268 aa).

The AB hydrolase-1 domain occupies 23 to 254 (PIIFLHGWPL…NSGHGAFYEE (232 aa)). Residues Ser96, Asp220, and His248 contribute to the active site.

This sequence belongs to the AB hydrolase superfamily.

This chain is AB hydrolase superfamily protein YisY (yisY), found in Bacillus subtilis (strain 168).